The primary structure comprises 338 residues: Inositol 2-dehydrogenase (338 aa).

Belongs to the Gfo/Idh/MocA family. Homotetramer.

The catalysed reaction is myo-inositol + NAD(+) = scyllo-inosose + NADH + H(+). Functionally, involved in the oxidation of myo-inositol (MI) to 2-keto-myo-inositol (2KMI or 2-inosose). The protein is Inositol 2-dehydrogenase of Azotobacter vinelandii (strain DJ / ATCC BAA-1303).